Here is a 230-residue protein sequence, read N- to C-terminus: Biosynthetic peptidoglycan transglycosylase (230 aa).

Residues 10–30 traverse the membrane as a helical segment; that stretch reads IFLFFIAVIFVYQFWIFSQIV.

It belongs to the glycosyltransferase 51 family.

The protein resides in the cell inner membrane. It carries out the reaction [GlcNAc-(1-&gt;4)-Mur2Ac(oyl-L-Ala-gamma-D-Glu-L-Lys-D-Ala-D-Ala)](n)-di-trans,octa-cis-undecaprenyl diphosphate + beta-D-GlcNAc-(1-&gt;4)-Mur2Ac(oyl-L-Ala-gamma-D-Glu-L-Lys-D-Ala-D-Ala)-di-trans,octa-cis-undecaprenyl diphosphate = [GlcNAc-(1-&gt;4)-Mur2Ac(oyl-L-Ala-gamma-D-Glu-L-Lys-D-Ala-D-Ala)](n+1)-di-trans,octa-cis-undecaprenyl diphosphate + di-trans,octa-cis-undecaprenyl diphosphate + H(+). Its pathway is cell wall biogenesis; peptidoglycan biosynthesis. In terms of biological role, peptidoglycan polymerase that catalyzes glycan chain elongation from lipid-linked precursors. This chain is Biosynthetic peptidoglycan transglycosylase, found in Nitrosospira multiformis (strain ATCC 25196 / NCIMB 11849 / C 71).